A 293-amino-acid polypeptide reads, in one-letter code: Formamidopyrimidine-DNA glycosylase (293 aa).

The active-site Schiff-base intermediate with DNA is the P2. E3 acts as the Proton donor in catalysis. K58 (proton donor; for beta-elimination activity) is an active-site residue. H104, R123, and R166 together coordinate DNA. An FPG-type zinc finger spans residues 257–293 (QVYDREGDKCRTPACKGAVKRFTQNGRSTFWCPVCQT). R283 (proton donor; for delta-elimination activity) is an active-site residue.

This sequence belongs to the FPG family. As to quaternary structure, monomer. Zn(2+) is required as a cofactor.

The catalysed reaction is Hydrolysis of DNA containing ring-opened 7-methylguanine residues, releasing 2,6-diamino-4-hydroxy-5-(N-methyl)formamidopyrimidine.. It catalyses the reaction 2'-deoxyribonucleotide-(2'-deoxyribose 5'-phosphate)-2'-deoxyribonucleotide-DNA = a 3'-end 2'-deoxyribonucleotide-(2,3-dehydro-2,3-deoxyribose 5'-phosphate)-DNA + a 5'-end 5'-phospho-2'-deoxyribonucleoside-DNA + H(+). Involved in base excision repair of DNA damaged by oxidation or by mutagenic agents. Acts as a DNA glycosylase that recognizes and removes damaged bases. Has a preference for oxidized purines, such as 7,8-dihydro-8-oxoguanine (8-oxoG). Has AP (apurinic/apyrimidinic) lyase activity and introduces nicks in the DNA strand. Cleaves the DNA backbone by beta-delta elimination to generate a single-strand break at the site of the removed base with both 3'- and 5'-phosphates. This is Formamidopyrimidine-DNA glycosylase from Nitrobacter winogradskyi (strain ATCC 25391 / DSM 10237 / CIP 104748 / NCIMB 11846 / Nb-255).